We begin with the raw amino-acid sequence, 119 residues long: Small ribosomal subunit protein bS16 (119 aa).

The protein belongs to the bacterial ribosomal protein bS16 family.

The chain is Small ribosomal subunit protein bS16 from Chlamydia abortus (strain DSM 27085 / S26/3) (Chlamydophila abortus).